A 318-amino-acid polypeptide reads, in one-letter code: Magnetosome protein MamM (318 aa).

The transmembrane domain (TMD) stretch occupies residues 1-210 (MRKSGCAVCS…FMDAYRGLMD (210 aa)). Transmembrane regions (helical) follow at residues 13-33 (IGWVGLAVSTVLMVMKAFVGL), 39-59 (AMLADAMYSLKDMLNALMVII), 81-101 (FILSMVVSVVFIVLTGYLLVH), and 117-137 (LIVLWAALVSIGVNVGMYFYS). A C-terminal domain (CTD) region spans residues 211-318 (HTAGEAVQNR…DEVMLSKVDN (108 aa)). Positions 249, 264, 285, and 289 each coordinate Fe cation.

It belongs to the cation diffusion facilitator (CDF) transporter (TC 2.A.4) family. As to quaternary structure, forms homodimers via its C-terminal domain (CTD) in the presence of metal cations. Interacts with MamB via their CTD. Isolated CTD forms homodimers.

The protein localises to the magnetosome membrane. It localises to the cell inner membrane. Essential for magnetosome formation; required for stable accumulation of MamB. May nucleate iron crystal formation. Probably binds and transports iron. Binds divalent cations, possibly up to 3 Zn(2+) per dimer in vitro, probably iron in vivo. One of 7 genes (mamLQBIEMO) able to induce magnetosome membrane biogenesis; coexpression of mamLQRBIEMO in a deletion of the 17 gene mamAB operon restores magnetosome vesicle formation but not magnetite biosynthesis. This chain is Magnetosome protein MamM, found in Magnetospirillum gryphiswaldense (strain DSM 6361 / JCM 21280 / NBRC 15271 / MSR-1).